The chain runs to 251 residues: Triosephosphate isomerase (251 aa).

9-11 (NWK) contacts substrate. Catalysis depends on H94, which acts as the Electrophile. E166 (proton acceptor) is an active-site residue. Residues G172, S211, and 232 to 233 (GG) contribute to the substrate site.

Belongs to the triosephosphate isomerase family. As to quaternary structure, homodimer.

The protein resides in the cytoplasm. It carries out the reaction D-glyceraldehyde 3-phosphate = dihydroxyacetone phosphate. Its pathway is carbohydrate biosynthesis; gluconeogenesis. It participates in carbohydrate degradation; glycolysis; D-glyceraldehyde 3-phosphate from glycerone phosphate: step 1/1. Involved in the gluconeogenesis. Catalyzes stereospecifically the conversion of dihydroxyacetone phosphate (DHAP) to D-glyceraldehyde-3-phosphate (G3P). This is Triosephosphate isomerase from Xanthomonas campestris pv. campestris (strain 8004).